The sequence spans 354 residues: Peptide chain release factor 1 (354 aa).

Residue Q231 is modified to N5-methylglutamine. Basic and acidic residues predominate over residues E284–R304. The disordered stretch occupies residues E284–F308.

Belongs to the prokaryotic/mitochondrial release factor family. Post-translationally, methylated by PrmC. Methylation increases the termination efficiency of RF1.

The protein resides in the cytoplasm. Peptide chain release factor 1 directs the termination of translation in response to the peptide chain termination codons UAG and UAA. The chain is Peptide chain release factor 1 from Nitratiruptor sp. (strain SB155-2).